The chain runs to 140 residues: Perlin matrix protein (140 aa).

Residues 1–26 (MTCTLRLTVAALVLLGICHLSRPVAA) form the signal peptide.

Belongs to the N16 matrix protein family. As to quaternary structure, heterooligomer; disulfide-linked. Pif97, Pif80, N16 and other proteins form a complex. In terms of tissue distribution, component of conchiolin, the organic matrix of nacre. Only expressed in the dorsal region of the mantle.

It is found in the secreted. The protein resides in the extracellular space. It localises to the extracellular matrix. Functionally, may be specifically involved in the formation of the nacreous layer. This is Perlin matrix protein from Margaritifera margaritifera (Freshwater pearl mussel).